The following is a 371-amino-acid chain: Deoxyguanosinetriphosphate triphosphohydrolase-like protein (371 aa).

Residues 62–200 (RITHSIEVAQ…SAISDDIAYN (139 aa)) enclose the HD domain.

Belongs to the dGTPase family. Type 2 subfamily.

The protein is Deoxyguanosinetriphosphate triphosphohydrolase-like protein of Pelagibacter ubique (strain HTCC1062).